The following is a 733-amino-acid chain: Tudor domain-containing protein 3 (733 aa).

Positions threonine 241 to asparagine 281 are disordered. Residues lysine 262–asparagine 281 are compositionally biased toward basic and acidic residues. The UBA domain maps to leucine 290–arginine 330. Residues glutamine 333 to aspartate 630 form a disordered region. The span at proline 346–arginine 355 shows a compositional bias: basic residues. Residues proline 392 to glutamine 408 are compositionally biased toward polar residues. A compositionally biased stretch (basic and acidic residues) spans proline 420–phenylalanine 441. Residues proline 446–glutamine 455 show a composition bias toward polar residues. Positions lysine 456–aspartate 478 are enriched in basic and acidic residues. Positions valine 484–alanine 499 are enriched in polar residues. The span at histidine 559 to glutamine 570 shows a compositional bias: basic and acidic residues. Positions asparagine 639 to aspartate 699 constitute a Tudor domain. The span at leucine 706–proline 716 shows a compositional bias: basic and acidic residues. The tract at residues leucine 706–aspartate 733 is disordered.

Component of mRNA stress granules.

Its subcellular location is the cytoplasm. The protein resides in the nucleus. Functionally, scaffolding protein that specifically recognizes and binds dimethylarginine-containing proteins. Plays a role in the regulation of translation of target mRNAs by binding Arg/Gly-rich motifs (GAR) in dimethylarginine-containing proteins. In nucleus, acts as a coactivator: recognizes and binds asymmetric dimethylation on the core histone tails associated with transcriptional activation (H3R17me2a and H4R3me2a) and recruits proteins at these arginine-methylated loci. In cytoplasm, acts as an antiviral factor that participates in the assembly of stress granules together with G3BP1. In Danio rerio (Zebrafish), this protein is Tudor domain-containing protein 3 (tdrd3).